The chain runs to 163 residues: uncharacterized protein (163 aa).

Residues 142-163 (PQIVISEHNNTKETSPSRQFEH) form a disordered region. Over residues 153–163 (KETSPSRQFEH) the composition is skewed to polar residues.

The protein belongs to the RCAN family.

Its function is as follows. Inhibits calcineurin-dependent transcriptional responses by binding to the catalytic domain of calcineurin. This is an uncharacterized protein from Schizosaccharomyces pombe (strain 972 / ATCC 24843) (Fission yeast).